We begin with the raw amino-acid sequence, 265 residues long: MANEGEEIELTEFPETEKERKDEEKLSSCSEETTDTSSSSSSDHVPAPIEVNVIIQNSSRTEDELQNSTKFAVANEGKEIELTGFQGKLSSCSEETTATSSSYSSKQASVCIEENGDNETSTYRPQNVLTNLNSLYTTFEDARAQGKGMVRYKSEDLQSFLEKYPPDYRKPKRDLSATWDPGMPTPALPPRPANLGERQASTVRLHVKESNCKQPRERKANERNIVKDLKRLENKVNAIICLVVVILAVLLLVTVLSILHIGMKS.

Residues 1-14 (MANEGEEIELTEFP) are compositionally biased toward acidic residues. A disordered region spans residues 1–49 (MANEGEEIELTEFPETEKERKDEEKLSSCSEETTDTSSSSSSDHVPAPI). Over 1–238 (MANEGEEIEL…LKRLENKVNA (238 aa)) the chain is Cytoplasmic. The span at 15 to 26 (ETEKERKDEEKL) shows a compositional bias: basic and acidic residues. The span at 27 to 43 (SSCSEETTDTSSSSSSD) shows a compositional bias: low complexity. Tyr123 carries the phosphotyrosine; by host LCK modification. The residue at position 136 (Tyr136) is a Phosphotyrosine; by host. Residues 155 to 164 (EDLQSFLEKY) form a CSKH/LBD2 region. The disordered stretch occupies residues 172–192 (KRDLSATWDPGMPTPALPPRP). Positions 183–192 (MPTPALPPRP) are SH3B/LBD1. Residues 183–192 (MPTPALPPRP) show a composition bias toward pro residues. The segment at 225–234 (IVKDLKRLEN) is SH3 binding. The chain crosses the membrane as a helical span at residues 239 to 259 (IICLVVVILAVLLLVTVLSIL). Topologically, residues 260–265 (HIGMKS) are extracellular.

Binds host LCK, human WDR48 and human NXF1/TAP. Forms a complex with activated LCK and STAT1 and STAT3. Phosphorylation on Tyr-123 acts as a docking site for the recruitment of STATs 1 and 3.

It localises to the host cell membrane. Functionally, plays a critical role in virus induced T-cell transformation. Binds to T-cell-specific tyrosine kinase LCK SH2 and SH3 domains, thereby activating its kinase activity. Once phosphorylated by host LCK, forms a complex with at least STAT 1 and 3, resulting on the phosphorylation of STAT3 and presumably STAT1, and their migration into the nucleus to induce transcription of target genes. Stimulates host ILF3/NF-AT-90 activity. Association with host NXF1/TAP transduces the signal up-regulating surface expression of adhesion molecules as well as activating NF-kappa-B activity. Acts synergistically with StpC to stimulate NF-kappa-B activity and interleukin-2 gene expression. Activation of NF-kappa-B protects lymphocytes from apoptosis, thereby facilitating viral induced cell transformation. May cause down-regulation of host LCK and cell apoptosis when stably overexpressed ex vivo. Interaction with WDR48 induce degradation of T-cell receptor in a lysosome-dependent fashion, when both proteins are overexpressed. The biological effect of this interaction remains controversial since no T-cell receptor degradation is observed in infected cells. The chain is Tyrosine protein kinase-interacting protein from Saimiriine herpesvirus 2 (strain 484) (SaHV-2).